Consider the following 131-residue polypeptide: Arsenate reductase (131 aa).

Active-site nucleophile residues include C10, C82, and C89. Disulfide bonds link C10-C82 and C82-C89.

This sequence belongs to the low molecular weight phosphotyrosine protein phosphatase family. Thioredoxin-coupled ArsC subfamily.

It localises to the cytoplasm. It carries out the reaction arsenate + [thioredoxin]-dithiol + H(+) = arsenite + [thioredoxin]-disulfide + H2O. Its function is as follows. Catalyzes the reduction of arsenate [As(V)] to arsenite [As(III)]. In Staphylococcus aureus (strain COL), this protein is Arsenate reductase.